A 305-amino-acid polypeptide reads, in one-letter code: tRNA pseudouridine synthase B (305 aa).

D48 acts as the Nucleophile in catalysis.

Belongs to the pseudouridine synthase TruB family. Type 1 subfamily.

It carries out the reaction uridine(55) in tRNA = pseudouridine(55) in tRNA. Responsible for synthesis of pseudouridine from uracil-55 in the psi GC loop of transfer RNAs. In Mannheimia succiniciproducens (strain KCTC 0769BP / MBEL55E), this protein is tRNA pseudouridine synthase B.